Consider the following 849-residue polypeptide: Cytosolic phospholipase A2 zeta (849 aa).

The 119-residue stretch at 27–145 folds into the C2 domain; the sequence is EKRGPLWRHW…KCGQPHKHTF (119 aa). Residues D60, D66, D116, D118, and D123 each contribute to the Ca(2+) site. The region spanning 306–849 is the PLA2c domain; it reads EMSSGDLDLR…RHQARERAGA (544 aa). S395 (nucleophile) is an active-site residue. Catalysis depends on D680, which acts as the Proton acceptor.

Ca(2+) serves as cofactor. As to expression, expressed in myocardium (at protein level).

The protein resides in the cytoplasm. It localises to the cytosol. Its subcellular location is the cell membrane. It is found in the mitochondrion. It catalyses the reaction a 1,2-diacyl-sn-glycero-3-phosphocholine + H2O = a 1-acyl-sn-glycero-3-phosphocholine + a fatty acid + H(+). The enzyme catalyses a 1-O-alkyl-2-acyl-sn-glycero-3-phosphocholine + H2O = a 1-O-alkyl-sn-glycero-3-phosphocholine + a fatty acid + H(+). It carries out the reaction 1-hexadecanoyl-2-(9Z-octadecenoyl)-sn-glycero-3-phosphocholine + H2O = 2-(9Z-octadecenoyl)-sn-glycero-3-phosphocholine + hexadecanoate + H(+). The catalysed reaction is 1-hexadecanoyl-2-(9Z,12Z-octadecadienoyl)-sn-glycero-3-phosphocholine + H2O = (9Z,12Z)-octadecadienoate + 1-hexadecanoyl-sn-glycero-3-phosphocholine + H(+). It catalyses the reaction 1-hexadecanoyl-2-(5Z,8Z,11Z,14Z-eicosatetraenoyl)-sn-glycero-3-phosphocholine + H2O = 1-hexadecanoyl-sn-glycero-3-phosphocholine + (5Z,8Z,11Z,14Z)-eicosatetraenoate + H(+). The enzyme catalyses 1-hexadecanoyl-2-(9Z,12Z-octadecadienoyl)-sn-glycero-3-phosphoethanolamine + H2O = 1-hexadecanoyl-sn-glycero-3-phosphoethanolamine + (9Z,12Z)-octadecadienoate + H(+). It carries out the reaction 1-hexadecanoyl-2-(5Z,8Z,11Z,14Z-eicosatetraenoyl)-sn-glycero-3-phosphoethanolamine + H2O = 1-hexadecanoyl-sn-glycero-3-phosphoethanolamine + (5Z,8Z,11Z,14Z)-eicosatetraenoate + H(+). The catalysed reaction is 1-(5Z,8Z,11Z,14Z-eicosatetraenoyl)-2-O-hexadecyl-sn-glycero-3-phosphocholine + H2O = 2-O-hexadecyl-sn-glycero-3-phosphocholine + (5Z,8Z,11Z,14Z)-eicosatetraenoate + H(+). It catalyses the reaction 1-O-hexadecyl-2-(5Z,8Z,11Z,14Z)-eicosatetraenoyl-sn-glycero-3-phosphocholine + H2O = 1-O-hexadecyl-sn-glycero-3-phosphocholine + (5Z,8Z,11Z,14Z)-eicosatetraenoate + H(+). The enzyme catalyses 1-hexadecanoyl-sn-glycero-3-phosphocholine + H2O = sn-glycerol 3-phosphocholine + hexadecanoate + H(+). With respect to regulation, stimulated by cytosolic Ca(2+). Has calcium-dependent phospholipase and lysophospholipase activities with a potential role in membrane lipid remodeling and biosynthesis of lipid mediators. Preferentially hydrolyzes the ester bond of the fatty acyl group attached at sn-2 position of phospholipids (phospholipase A2 activity). Selectively hydrolyzes sn-2 arachidonoyl group from membrane phospholipids, providing the precursor for eicosanoid biosynthesis. In myocardial mitochondria, plays a major role in arachidonate release that is metabolically channeled to the formation of cardioprotective eicosanoids, epoxyeicosatrienoates (EETs). The protein is Cytosolic phospholipase A2 zeta (PLA2G4F) of Homo sapiens (Human).